A 235-amino-acid polypeptide reads, in one-letter code: Uridylate kinase (235 aa).

Residue 8–11 (KFSG) participates in ATP binding. An involved in allosteric activation by GTP region spans residues 16–21 (GAEGYG). G50 is a UMP binding site. ATP contacts are provided by G51 and R55. Residues D71 and 132 to 139 (TGNPYFTT) each bind UMP. Residues T159, Y165, and D168 each coordinate ATP.

This sequence belongs to the UMP kinase family. As to quaternary structure, homohexamer.

It localises to the cytoplasm. It catalyses the reaction UMP + ATP = UDP + ADP. The protein operates within pyrimidine metabolism; CTP biosynthesis via de novo pathway; UDP from UMP (UMPK route): step 1/1. Allosterically activated by GTP. Inhibited by UTP. Functionally, catalyzes the reversible phosphorylation of UMP to UDP. This is Uridylate kinase from Aliarcobacter butzleri (strain RM4018) (Arcobacter butzleri).